Consider the following 148-residue polypeptide: Globin, monomeric component M-IV (148 aa).

Residues 2-147 (GLSAAQRQVV…ISGALISGLQ (146 aa)) enclose the Globin domain. Histidine 91 is a heme b binding site.

In terms of assembly, monomer.

The sequence is that of Globin, monomeric component M-IV from Glycera dibranchiata (Bloodworm).